An 88-amino-acid chain; its full sequence is Small ribosomal subunit protein uS15 (88 aa).

It belongs to the universal ribosomal protein uS15 family. Part of the 30S ribosomal subunit. Forms a bridge to the 50S subunit in the 70S ribosome, contacting the 23S rRNA.

One of the primary rRNA binding proteins, it binds directly to 16S rRNA where it helps nucleate assembly of the platform of the 30S subunit by binding and bridging several RNA helices of the 16S rRNA. Functionally, forms an intersubunit bridge (bridge B4) with the 23S rRNA of the 50S subunit in the ribosome. The polypeptide is Small ribosomal subunit protein uS15 (Leptospira borgpetersenii serovar Hardjo-bovis (strain JB197)).